Reading from the N-terminus, the 301-residue chain is 3-dehydroquinate dehydratase (301 aa).

The tract at residues 1–221 is 3-dehydroquinate dehydratase; sequence MLQYGVLICG…YYAALLALGI (221 aa). 3-dehydroquinate contacts are provided by residues 32 to 34 and Arg63; that span reads ELR. The active-site Proton donor/acceptor is His119. Lys145 functions as the Schiff-base intermediate with substrate in the catalytic mechanism. 3-dehydroquinate contacts are provided by Arg183, Thr202, and Gln206. A Chorismate mutase domain is found at 222–301; that stretch reads TPSGGGLPAL…QMCKAVQLVA (80 aa).

This sequence belongs to the type-I 3-dehydroquinase family. As to quaternary structure, homodimer.

The catalysed reaction is 3-dehydroquinate = 3-dehydroshikimate + H2O. It functions in the pathway metabolic intermediate biosynthesis; chorismate biosynthesis; chorismate from D-erythrose 4-phosphate and phosphoenolpyruvate: step 3/7. Involved in the third step of the chorismate pathway, which leads to the biosynthesis of aromatic amino acids. Catalyzes the cis-dehydration of 3-dehydroquinate (DHQ) and introduces the first double bond of the aromatic ring to yield 3-dehydroshikimate. This Pyrobaculum aerophilum (strain ATCC 51768 / DSM 7523 / JCM 9630 / CIP 104966 / NBRC 100827 / IM2) protein is 3-dehydroquinate dehydratase.